The primary structure comprises 109 residues: Protein reprimo (109 aa).

N-linked (GlcNAc...) asparagine glycosylation is found at asparagine 7 and asparagine 18. The helical transmembrane segment at 56–76 threads the bilayer; it reads VVQIAVMCVLSLTVVFGIFFL. Serine 98 carries the phosphoserine modification.

This sequence belongs to the reprimo family.

It is found in the cytoplasm. The protein resides in the membrane. May be involved in the regulation of p53-dependent G2 arrest of the cell cycle. Seems to induce cell cycle arrest by inhibiting CDK1 activity and nuclear translocation of the CDC2 cyclin B1 complex. The polypeptide is Protein reprimo (RPRM) (Homo sapiens (Human)).